The primary structure comprises 59 residues: Large ribosomal subunit protein uL30 (59 aa).

This sequence belongs to the universal ribosomal protein uL30 family. In terms of assembly, part of the 50S ribosomal subunit.

This is Large ribosomal subunit protein uL30 from Brachyspira hyodysenteriae (strain ATCC 49526 / WA1).